A 581-amino-acid chain; its full sequence is Proline--tRNA ligase 1 (581 aa).

This sequence belongs to the class-II aminoacyl-tRNA synthetase family. ProS type 1 subfamily. Homodimer.

It localises to the cytoplasm. The catalysed reaction is tRNA(Pro) + L-proline + ATP = L-prolyl-tRNA(Pro) + AMP + diphosphate. In terms of biological role, catalyzes the attachment of proline to tRNA(Pro) in a two-step reaction: proline is first activated by ATP to form Pro-AMP and then transferred to the acceptor end of tRNA(Pro). As ProRS can inadvertently accommodate and process non-cognate amino acids such as alanine and cysteine, to avoid such errors it has two additional distinct editing activities against alanine. One activity is designated as 'pretransfer' editing and involves the tRNA(Pro)-independent hydrolysis of activated Ala-AMP. The other activity is designated 'posttransfer' editing and involves deacylation of mischarged Ala-tRNA(Pro). The misacylated Cys-tRNA(Pro) is not edited by ProRS. The sequence is that of Proline--tRNA ligase 1 from Rhodococcus jostii (strain RHA1).